We begin with the raw amino-acid sequence, 379 residues long: MDPMESSSEQDIVEESQKLVDSLDKLRVSAASSSSNFKKKPIIIIVVGMAGSGKTSFLHRLVCHTFDSKSHGYVVNLDPAVMSLPFGANIDIRDTVKYKEVMKQYNLGPNGGILTSLNLFATKFDEVVSVIEKRADQLDYVLVDTPGQIEIFTWSASGAIITEAFASTFPTVVTYVVDTPRSSSPITFMSNMLYACSILYKTRLPLVLAFNKTDVADHKFALEWMEDFEVFQAAIQSDNSYTATLANSLSLSLYEFYRNIRSVGVSAISGAGMDGFFKAIEASAEEYMETYKADLDMRKADKERLEEERKKHEMEKLRKDMESSQGGTVVLNTGLKDRDATEKMMLEEDDEDFQVEDEEDSDDAIDEDDEDDETKHYYL.

Residue M1 is modified to N-acetylmethionine. 51 to 56 (GSGKTS) contacts GTP. The short motif at 108 to 110 (GPN) is the Gly-Pro-Asn (GPN)-loop; involved in dimer interface element. Residues 211 to 214 (NKTD) and A267 each bind GTP. Residues 288-322 (METYKADLDMRKADKERLEEERKKHEMEKLRKDME) adopt a coiled-coil conformation. 2 stretches are compositionally biased toward basic and acidic residues: residues 303 to 322 (ERLE…KDME) and 335 to 346 (LKDRDATEKMML). A disordered region spans residues 303–379 (ERLEEERKKH…EDDETKHYYL (77 aa)). Residues 347 to 372 (EEDDEDFQVEDEEDSDDAIDEDDEDD) show a composition bias toward acidic residues.

Belongs to the GPN-loop GTPase family. As to quaternary structure, heterodimer with QQT1. As to expression, expressed in individual cells of roots, leaves and flowers.

The protein localises to the cytoplasm. Its subcellular location is the nucleus. The protein resides in the cytoskeleton. It is found in the spindle. It localises to the phragmoplast. Small GTPase that is essential for the correct formation of the tangential divisions in early embryos. Associates with microtubule during mitosis and may function in the positioning of the division plane. May participate in the patterning of the early embryo at the octant-dermatogen transition. The polypeptide is GPN-loop GTPase QQT2 (Arabidopsis thaliana (Mouse-ear cress)).